A 77-amino-acid polypeptide reads, in one-letter code: Acyl carrier protein (77 aa).

The Carrier domain maps to Ala-2–Leu-77. Ser-37 carries the post-translational modification O-(pantetheine 4'-phosphoryl)serine.

The protein belongs to the acyl carrier protein (ACP) family. Post-translationally, 4'-phosphopantetheine is transferred from CoA to a specific serine of apo-ACP by AcpS. This modification is essential for activity because fatty acids are bound in thioester linkage to the sulfhydryl of the prosthetic group.

The protein resides in the cytoplasm. The protein operates within lipid metabolism; fatty acid biosynthesis. Its function is as follows. Carrier of the growing fatty acid chain in fatty acid biosynthesis. The polypeptide is Acyl carrier protein (Geobacillus kaustophilus (strain HTA426)).